We begin with the raw amino-acid sequence, 555 residues long: TBCC domain-containing protein 1 (555 aa).

A C-CAP/cofactor C-like domain is found at 302–433 (PEVSPMVIMS…LEDHMAQVGL (132 aa)).

Belongs to the TBCC family.

The protein resides in the cytoplasm. Its subcellular location is the cytoskeleton. It is found in the microtubule organizing center. It localises to the centrosome. The protein localises to the spindle pole. In terms of biological role, may play a role in the regulation of centrosome and Golgi apparatus positioning. The chain is TBCC domain-containing protein 1 (TBCCD1) from Gallus gallus (Chicken).